The primary structure comprises 76 residues: Small ribosomal subunit protein bS18 (76 aa).

Belongs to the bacterial ribosomal protein bS18 family. Part of the 30S ribosomal subunit. Forms a tight heterodimer with protein bS6.

Its function is as follows. Binds as a heterodimer with protein bS6 to the central domain of the 16S rRNA, where it helps stabilize the platform of the 30S subunit. In Pseudomonas fluorescens (strain ATCC BAA-477 / NRRL B-23932 / Pf-5), this protein is Small ribosomal subunit protein bS18.